A 520-amino-acid polypeptide reads, in one-letter code: Pleckstrin homology domain-containing family A member 8 (520 aa).

The region spanning 1–93 (MEGVLYKWTN…WLVALGSAKA (93 aa)) is the PH domain. Position 139 is a phosphothreonine (T139). S145 carries the post-translational modification Phosphoserine. T153 is subject to Phosphothreonine. The segment covering 275–285 (GEESLGNHDSD) has biased composition (basic and acidic residues). The interval 275–305 (GEESLGNHDSDLAQPELHSTSSSPESHWEED) is disordered. Residues 311 to 520 (TFFSTMNTSF…VHGLESDEVV (210 aa)) form a glycolipid transfer protein homology domain region.

Homodimer. Interacts with ARF1; the interaction together with phosphatidylinositol 4-phosphate binding is required for FAPP2 GlcCer transfer ability.

It localises to the cytoplasm. The protein resides in the golgi apparatus. It is found in the trans-Golgi network membrane. Its subcellular location is the membrane. Cargo transport protein that is required for apical transport from the trans-Golgi network (TGN). Transports AQP2 from the trans-Golgi network (TGN) to sites of AQP2 phosphorylation. Mediates the non-vesicular transport of glucosylceramide (GlcCer) from the trans-Golgi network (TGN) to the plasma membrane and plays a pivotal role in the synthesis of complex glycosphingolipids. Binding of both phosphatidylinositol 4-phosphate (PIP) and ARF1 are essential for the GlcCer transfer ability. Also required for primary cilium formation, possibly by being involved in the transport of raft lipids to the apical membrane, and for membrane tubulation. This Bos taurus (Bovine) protein is Pleckstrin homology domain-containing family A member 8 (PLEKHA8).